A 457-amino-acid polypeptide reads, in one-letter code: Exodeoxyribonuclease 7 large subunit (457 aa).

It belongs to the XseA family. As to quaternary structure, heterooligomer composed of large and small subunits.

Its subcellular location is the cytoplasm. The enzyme catalyses Exonucleolytic cleavage in either 5'- to 3'- or 3'- to 5'-direction to yield nucleoside 5'-phosphates.. Bidirectionally degrades single-stranded DNA into large acid-insoluble oligonucleotides, which are then degraded further into small acid-soluble oligonucleotides. The polypeptide is Exodeoxyribonuclease 7 large subunit (Citrobacter koseri (strain ATCC BAA-895 / CDC 4225-83 / SGSC4696)).